The primary structure comprises 325 residues: Cln5-like protein 2 (325 aa).

A signal peptide spans 1–19 (MNKLIFIIICLGIVDKTIS). Asn-88, Asn-117, Asn-133, Asn-163, Asn-182, Asn-189, Asn-238, and Asn-262 each carry an N-linked (GlcNAc...) asparagine glycan.

The protein belongs to the CLN5 family.

This Dictyostelium discoideum (Social amoeba) protein is Cln5-like protein 2 (cln5lb).